Consider the following 797-residue polypeptide: LPS-assembly protein LptD (797 aa).

An N-terminal signal peptide occupies residues 1–20 (MHTIRCLILSALSVAGAAQA). Residues 23-45 (SQDAAPAGRQPVGSVASPGLEMP) form a disordered region.

It belongs to the LptD family. Component of the lipopolysaccharide transport and assembly complex. Interacts with LptE and LptA.

It is found in the cell outer membrane. Together with LptE, is involved in the assembly of lipopolysaccharide (LPS) at the surface of the outer membrane. The sequence is that of LPS-assembly protein LptD from Bordetella avium (strain 197N).